A 240-amino-acid polypeptide reads, in one-letter code: Ubiquinone biosynthesis O-methyltransferase (240 aa).

S-adenosyl-L-methionine contacts are provided by Arg-44, Gly-64, Asp-85, and Met-129.

This sequence belongs to the methyltransferase superfamily. UbiG/COQ3 family.

The catalysed reaction is a 3-demethylubiquinol + S-adenosyl-L-methionine = a ubiquinol + S-adenosyl-L-homocysteine + H(+). It catalyses the reaction a 3-(all-trans-polyprenyl)benzene-1,2-diol + S-adenosyl-L-methionine = a 2-methoxy-6-(all-trans-polyprenyl)phenol + S-adenosyl-L-homocysteine + H(+). The protein operates within cofactor biosynthesis; ubiquinone biosynthesis. In terms of biological role, O-methyltransferase that catalyzes the 2 O-methylation steps in the ubiquinone biosynthetic pathway. The sequence is that of Ubiquinone biosynthesis O-methyltransferase from Escherichia coli (strain K12 / MC4100 / BW2952).